The primary structure comprises 642 residues: Threonine--tRNA ligase (642 aa).

One can recognise a TGS domain in the interval 1–61; sequence MPIITLPDGS…SEDANLEIIT (61 aa). Residues 243-534 are catalytic; that stretch reads DHRKIGKALN…ITEEYAGFFP (292 aa). Zn(2+) contacts are provided by Cys-334, His-385, and His-511.

The protein belongs to the class-II aminoacyl-tRNA synthetase family. In terms of assembly, homodimer. Zn(2+) serves as cofactor.

It localises to the cytoplasm. It catalyses the reaction tRNA(Thr) + L-threonine + ATP = L-threonyl-tRNA(Thr) + AMP + diphosphate + H(+). Catalyzes the attachment of threonine to tRNA(Thr) in a two-step reaction: L-threonine is first activated by ATP to form Thr-AMP and then transferred to the acceptor end of tRNA(Thr). Also edits incorrectly charged L-seryl-tRNA(Thr). This Histophilus somni (strain 2336) (Haemophilus somnus) protein is Threonine--tRNA ligase.